The sequence spans 878 residues: Indoleacetate decarboxylase (878 aa).

Residues 42–750 (DRTKRMKERF…VTGATPDGRL (709 aa)) form the PFL domain. Residue Cys-500 is the Cysteine radical intermediate of the active site. Catalysis depends on Glu-502, which acts as the Proton acceptor. Positions 758–878 (GILSASPGTD…VIARTEYDAL (121 aa)) constitute a Glycine radical domain. Gly-853 bears the Glycine radical mark.

This sequence belongs to the glycyl radical enzyme (GRE) family. As to quaternary structure, homodimer (predominantly) and monomer. Post-translationally, requires the activating protein OsIADAE to generate the key active site glycyl radical on Gly-853 that is involved in catalysis.

It catalyses the reaction (indol-3-yl)acetate + H(+) = skatole + CO2. Its pathway is amino-acid degradation. Functionally, glycyl radical enzyme that catalyzes the terminal step of tryptophan fermentation, the decarboxylation of indoleacetate to form skatole, a malodorous compound that contributes to the characteristic smell of animal feces. No activity is detected with phenylacetate or p-hydroxyphenylacetate as substrates, indicating high substrate specificity. This chain is Indoleacetate decarboxylase, found in Tractidigestivibacter scatoligenes (Olsenella scatoligenes).